Reading from the N-terminus, the 149-residue chain is Large ribosomal subunit protein uL13 (149 aa).

It belongs to the universal ribosomal protein uL13 family. Part of the 50S ribosomal subunit.

Functionally, this protein is one of the early assembly proteins of the 50S ribosomal subunit, although it is not seen to bind rRNA by itself. It is important during the early stages of 50S assembly. The sequence is that of Large ribosomal subunit protein uL13 from Bifidobacterium longum subsp. infantis (strain ATCC 15697 / DSM 20088 / JCM 1222 / NCTC 11817 / S12).